The sequence spans 244 residues: Mannose-binding protein C (244 aa).

The first 18 residues, 1 to 18 (MSLFTSFLLLCVLTAVYA), serve as a signal peptide directing secretion. One can recognise a Collagen-like domain in the interval 38 to 96 (GLNGFPGKDGHDGAKGEKGEPGQGLRGLQGPPGKVGPAGPPGNPGSKGATGPKGDRGES). Residue Pro-43 is modified to 4-hydroxyproline. The interval 43–99 (PGKDGHDGAKGEKGEPGQGLRGLQGPPGKVGPAGPPGNPGSKGATGPKGDRGESVEF) is disordered. Residues 45–57 (KDGHDGAKGEKGE) are compositionally biased toward basic and acidic residues. 4-hydroxyproline is present on residues Pro-58, Pro-69, Pro-78, and Pro-81. A compositionally biased stretch (low complexity) spans 65-74 (LQGPPGKVGP). Residues 108-126 (IAALRSELRAMRKWVLLSM) adopt a coiled-coil conformation. Residues 129–241 (NVGKKYFMSS…CSDSFLVVCE (113 aa)) form the C-type lectin domain. 2 cysteine pairs are disulfide-bonded: Cys-151–Cys-240 and Cys-218–Cys-232.

Oligomeric complex of 3 or more homotrimers. Interacts with MASP1 and MASP2. Interacts with MEP1A and MEP1B and may inhibit their catalytic activity.

Its subcellular location is the secreted. Functionally, calcium-dependent lectin involved in innate immune defense. Binds mannose, fucose and N-acetylglucosamine on different microorganisms and activates the lectin complement pathway. Binds to late apoptotic cells, as well as to apoptotic blebs and to necrotic cells, but not to early apoptotic cells, facilitating their uptake by macrophages. The protein is Mannose-binding protein C (Mbl2) of Rattus norvegicus (Rat).